Here is a 457-residue protein sequence, read N- to C-terminus: Cysteine--tRNA ligase (457 aa).

Cys29 is a binding site for Zn(2+). A 'HIGH' region motif is present at residues 31 to 41 (PTVYDNPHIGN). Zn(2+)-binding residues include Cys214, His239, and Glu243. Positions 272–276 (KMSKS) match the 'KMSKS' region motif. Position 275 (Lys275) interacts with ATP.

It belongs to the class-I aminoacyl-tRNA synthetase family. As to quaternary structure, monomer. Zn(2+) serves as cofactor.

It localises to the cytoplasm. It catalyses the reaction tRNA(Cys) + L-cysteine + ATP = L-cysteinyl-tRNA(Cys) + AMP + diphosphate. The sequence is that of Cysteine--tRNA ligase (cysS) from Rickettsia prowazekii (strain Madrid E).